The chain runs to 200 residues: Ciliary neurotrophic factor (200 aa).

This sequence belongs to the CNTF family. In terms of assembly, homodimer. As to expression, nervous system.

The protein resides in the cytoplasm. Functionally, CNTF is a survival factor for various neuronal cell types. Seems to prevent the degeneration of motor axons after axotomy. This Homo sapiens (Human) protein is Ciliary neurotrophic factor (CNTF).